The chain runs to 144 residues: Large ribosomal subunit protein uL13 (144 aa).

This sequence belongs to the universal ribosomal protein uL13 family. In terms of assembly, part of the 50S ribosomal subunit.

Functionally, this protein is one of the early assembly proteins of the 50S ribosomal subunit, although it is not seen to bind rRNA by itself. It is important during the early stages of 50S assembly. This chain is Large ribosomal subunit protein uL13, found in Desulfovibrio desulfuricans (strain ATCC 27774 / DSM 6949 / MB).